A 185-amino-acid chain; its full sequence is Crossover junction endodeoxyribonuclease RuvC (185 aa).

Residues Asp7, Glu66, and Asp137 contribute to the active site. Mg(2+) is bound by residues Asp7, Glu66, and Asp137.

It belongs to the RuvC family. Homodimer which binds Holliday junction (HJ) DNA. The HJ becomes 2-fold symmetrical on binding to RuvC with unstacked arms; it has a different conformation from HJ DNA in complex with RuvA. In the full resolvosome a probable DNA-RuvA(4)-RuvB(12)-RuvC(2) complex forms which resolves the HJ. The cofactor is Mg(2+).

It localises to the cytoplasm. The enzyme catalyses Endonucleolytic cleavage at a junction such as a reciprocal single-stranded crossover between two homologous DNA duplexes (Holliday junction).. Functionally, the RuvA-RuvB-RuvC complex processes Holliday junction (HJ) DNA during genetic recombination and DNA repair. Endonuclease that resolves HJ intermediates. Cleaves cruciform DNA by making single-stranded nicks across the HJ at symmetrical positions within the homologous arms, yielding a 5'-phosphate and a 3'-hydroxyl group; requires a central core of homology in the junction. The consensus cleavage sequence is 5'-(A/T)TT(C/G)-3'. Cleavage occurs on the 3'-side of the TT dinucleotide at the point of strand exchange. HJ branch migration catalyzed by RuvA-RuvB allows RuvC to scan DNA until it finds its consensus sequence, where it cleaves and resolves the cruciform DNA. In Anaeromyxobacter dehalogenans (strain 2CP-1 / ATCC BAA-258), this protein is Crossover junction endodeoxyribonuclease RuvC.